We begin with the raw amino-acid sequence, 320 residues long: Taste receptor type 2 member 109 (320 aa).

At 1 to 14 the chain is on the extracellular side; sequence MEHFLKSIFDISKN. A helical transmembrane segment spans residues 15 to 35; that stretch reads VLPIILFIELIIGIIGNGFMA. At 36–62 the chain is on the cytoplasmic side; sequence LVHCMDWVKRKKMSLVNQILTTLATSR. Residues 63–83 traverse the membrane as a helical segment; the sequence is ICLLWFMLLGLLITLLDPDLA. Topologically, residues 84-94 are extracellular; that stretch reads SARMMIQVASN. The helical transmembrane segment at 95–115 threads the bilayer; that stretch reads LWIIANHMSIWLATCLTVFYF. Residues 116-135 lie on the Cytoplasmic side of the membrane; that stretch reads LKIANFSSSLFLYLKWRVEK. Residues 136-156 traverse the membrane as a helical segment; it reads VISVIFLVSLVLLFLNMLLMN. The Extracellular portion of the chain corresponds to 157–191; sequence LENDMCIAEYHQINISYSFIYHYRADCERRVLRLH. N-linked (GlcNAc...) asparagine glycosylation is present at asparagine 170. A helical membrane pass occupies residues 192–212; it reads IIILSVPFVLSLPTFLLLIFS. Residues 213–240 are Cytoplasmic-facing; that stretch reads LWTHHKKMQQHVQGRRDASTTAHFKALQ. A helical transmembrane segment spans residues 241 to 261; it reads TVIAFLLLYCIFILSMLLQFW. Residues 262–270 are Extracellular-facing; the sequence is KYELMKKPL. The chain crosses the membrane as a helical span at residues 271–291; that stretch reads FILFCHIVYGAFPSFHSYVLI. The Cytoplasmic portion of the chain corresponds to 292-320; sequence LGDMKLRQASLSVLLWLKCRPNYIETLDL.

The protein belongs to the G-protein coupled receptor T2R family.

The protein localises to the membrane. Functionally, putative taste receptor which may play a role in the perception of bitterness. This Rattus norvegicus (Rat) protein is Taste receptor type 2 member 109.